Here is a 331-residue protein sequence, read N- to C-terminus: tRNA pseudouridine synthase B (331 aa).

The active-site Nucleophile is D51.

Belongs to the pseudouridine synthase TruB family. Type 1 subfamily.

The enzyme catalyses uridine(55) in tRNA = pseudouridine(55) in tRNA. Responsible for synthesis of pseudouridine from uracil-55 in the psi GC loop of transfer RNAs. The chain is tRNA pseudouridine synthase B from Verminephrobacter eiseniae (strain EF01-2).